The following is a 501-amino-acid chain: E3 ubiquitin-protein ligase TRIM35 (501 aa).

Met1 carries the post-translational modification N-acetylmethionine. At Ser8 the chain carries Phosphoserine. The RING-type zinc-finger motif lies at 21–61; sequence CAVCYDPFRDAVTLRCGHNFCRRCVSGCWEVQTTPSCPVCK. The segment at 96 to 137 adopts a B box-type zinc-finger fold; it reads RSPRPCRAHRAPLTLFCVEDKELLCCACQADARHQEHRVQPI. Zn(2+) contacts are provided by Cys101, His104, Cys123, and His129. Residues 209-252 are a coiled coil; it reads MKEESRKKHLLAEEKMKQLAEQTEALAREIERLQMEMKEDDMTF. The region spanning 284-495 is the B30.2/SPRY domain; that stretch reads LESLQYRVWK…LRICHLRVSI (212 aa).

In terms of assembly, interacts with PKM isoform M2, but not isoform M1; this interaction may compete with that between PKM and FGFR1, and hence reduces FGFR1-dependent tyrosine phosphorylation of PKM. Interacts with IRF7; this interaction promotes IRF7 proteasomal degradation. Interacts with TRAF3; this interaction promotes TRAF3 activation.

The protein localises to the cytoplasm. The protein resides in the nucleus. It catalyses the reaction S-ubiquitinyl-[E2 ubiquitin-conjugating enzyme]-L-cysteine + [acceptor protein]-L-lysine = [E2 ubiquitin-conjugating enzyme]-L-cysteine + N(6)-ubiquitinyl-[acceptor protein]-L-lysine.. It functions in the pathway protein modification; protein ubiquitination. Its function is as follows. E3 ubiquitin-protein ligase that participates in multiple biological processes including cell death, glucose metabolism, and in particular, the innate immune response. Mediates 'Lys-63'-linked polyubiquitination of TRAF3 thereby promoting type I interferon production via RIG-I signaling pathway. Can also catalyze 'Lys-48'-linked polyubiquitination and proteasomal degradation of viral proteins such as influenza virus PB2. Acts as a negative feedback regulator of TLR7- and TLR9-triggered signaling. Mechanistically, promotes the 'Lys-48'-linked ubiquitination of IRF7 and induces its degradation via a proteasome-dependent pathway. Reduces FGFR1-dependent tyrosine phosphorylation of PKM, inhibiting PKM-dependent lactate production, glucose metabolism, and cell growth. The protein is E3 ubiquitin-protein ligase TRIM35 (Trim35) of Rattus norvegicus (Rat).